The primary structure comprises 292 residues: Ribosomal protein L11 methyltransferase (292 aa).

Residues Thr-144, Gly-165, Asp-187, and Asn-229 each contribute to the S-adenosyl-L-methionine site.

It belongs to the methyltransferase superfamily. PrmA family.

The protein localises to the cytoplasm. It catalyses the reaction L-lysyl-[protein] + 3 S-adenosyl-L-methionine = N(6),N(6),N(6)-trimethyl-L-lysyl-[protein] + 3 S-adenosyl-L-homocysteine + 3 H(+). In terms of biological role, methylates ribosomal protein L11. The protein is Ribosomal protein L11 methyltransferase of Pseudomonas fluorescens (strain ATCC BAA-477 / NRRL B-23932 / Pf-5).